The primary structure comprises 130 residues: Small ribosomal subunit protein uS8 (130 aa).

This sequence belongs to the universal ribosomal protein uS8 family. As to quaternary structure, component of the 40S ribosomal subunit. Part of the small subunit (SSU) processome, composed of more than 70 proteins and the RNA chaperone small nucleolar RNA (snoRNA) U3.

It is found in the cytoplasm. Its subcellular location is the nucleus. The protein resides in the nucleolus. In terms of biological role, component of the small ribosomal subunit. Part of the small subunit (SSU) processome, first precursor of the small eukaryotic ribosomal subunit. During the assembly of the SSU processome in the nucleolus, many ribosome biogenesis factors, an RNA chaperone and ribosomal proteins associate with the nascent pre-rRNA and work in concert to generate RNA folding, modifications, rearrangements and cleavage as well as targeted degradation of pre-ribosomal RNA by the RNA exosome. Required for erythropoiesis during embryonic development. The chain is Small ribosomal subunit protein uS8 from Danio rerio (Zebrafish).